The primary structure comprises 524 residues: 2,3-bisphosphoglycerate-independent phosphoglycerate mutase (524 aa).

Mn(2+)-binding residues include aspartate 13 and serine 63. The active-site Phosphoserine intermediate is serine 63. Substrate-binding positions include histidine 124, 154–155 (RD), arginine 186, arginine 192, 262–265 (RADR), and lysine 337. Residues aspartate 404, histidine 408, aspartate 445, histidine 446, and histidine 464 each contribute to the Mn(2+) site.

Belongs to the BPG-independent phosphoglycerate mutase family. Monomer. The cofactor is Mn(2+).

The catalysed reaction is (2R)-2-phosphoglycerate = (2R)-3-phosphoglycerate. Its pathway is carbohydrate degradation; glycolysis; pyruvate from D-glyceraldehyde 3-phosphate: step 3/5. Functionally, catalyzes the interconversion of 2-phosphoglycerate and 3-phosphoglycerate. In Thermomicrobium roseum (strain ATCC 27502 / DSM 5159 / P-2), this protein is 2,3-bisphosphoglycerate-independent phosphoglycerate mutase.